Here is a 112-residue protein sequence, read N- to C-terminus: Gonad-inhibiting hormone (112 aa).

The signal sequence occupies residues 1–31 (MVTRVGSGFSVQRVWLLLVIVVVLCGSVTQQ). 3 disulfides stabilise this stretch: Cys41/Cys78, Cys58/Cys74, and Cys61/Cys87. An Alanine amide modification is found at Ala109.

As to expression, produced in the eyestalk X-organ sinus gland complex of male and female lobsters.

It localises to the secreted. Its function is as follows. Inhibits vitellogenesis in female animals. Plays a prominent role in the regulation of reproduction/molting processes. The polypeptide is Gonad-inhibiting hormone (Homarus americanus (American lobster)).